The following is a 579-amino-acid chain: Mycobactin import ATP-binding/permease protein IrtB (579 aa).

The Cytoplasmic segment spans residues 1–16; that stretch reads MIRTWIALVPNDHRAR. A helical membrane pass occupies residues 17-37; sequence LIGFALLAFCSVVARAVGTVL. One can recognise an ABC transmembrane type-1 domain in the interval 17–299; that stretch reads LIGFALLAFC…VSELAPALES (283 aa). Residues 38–52 are Periplasmic-facing; that stretch reads LVPLMAALFGEAPQR. A helical membrane pass occupies residues 53–73; it reads AWLWLGWLSAATVAGWVLDAV. Over 74–123 the chain is Cytoplasmic; it reads TARIGIELGFAVLNHTQHDVADRLPVVRLDWFTAENTATARQAIAATGPE. Residues 124–146 form a helical membrane-spanning segment; sequence LVGLVVNLVTPLTSAILLPAVIA. Topologically, residues 147 to 155 are periplasmic; that stretch reads LALLPISWQ. The helical transmembrane segment at 156-178 threads the bilayer; it reads LGVAALAGVPLLLGALWASAAFA. At 179–237 the chain is on the cytoplasmic side; it reads RRADTAADKANTALTERIIEFARTQQALRAARRVEPARSLVGNALASQHTATMRLLGMQ. A helical membrane pass occupies residues 238-258; sequence IPGQLLFSIASQLALIVLAGT. Residues 259-579 lie on the Periplasmic side of the membrane; sequence TAALTITGTL…EAAEWQILAE (321 aa). An ABC transporter domain is found at 332–567; it reads IEFDDVAFGY…GGRFSQFWRQ (236 aa). 366–373 is a binding site for ATP; it reads GPSGCGKS.

The protein belongs to the ABC transporter superfamily. Siderophore-Fe(3+) uptake transporter (SIUT) (TC 3.A.1.21) family. As to quaternary structure, forms a heterodimer with IrtA.

The protein localises to the cell inner membrane. Functionally, part of the ABC transporter complex IrtAB involved in the import of iron-bound mycobactin (Fe-MBT) and carboxymycobactin (Fe-cMBT). Transmembrane domains (TMD) form a pore in the membrane and the ATP-binding domain (NBD) is responsible for energy generation. The chain is Mycobactin import ATP-binding/permease protein IrtB (irtB) from Mycobacterium bovis (strain ATCC BAA-935 / AF2122/97).